The sequence spans 541 residues: Formimidoyltransferase-cyclodeaminase (541 aa).

The interval 1 to 181 (MSQLVECVPN…GATVTGARKF (181 aa)) is formiminotransferase N-subdomain. The For formimidoyltransferase activity role is filled by His82. A folate-binding site is contributed by 163-172 (GPSSFVPSWG). The segment at 182 to 326 (LIAFNINLLS…PKERIIEYLV (145 aa)) is formiminotransferase C-subdomain. The linker stretch occupies residues 327-334 (PDSGPEQS). Positions 335-541 (LLDTSLRGFV…VLGSLEARKE (207 aa)) are cyclodeaminase/cyclohydrolase. Asp412 (for cyclodeaminase activity) is an active-site residue. Ser520 carries the phosphoserine modification.

The protein in the C-terminal section; belongs to the cyclodeaminase/cyclohydrolase family. In the N-terminal section; belongs to the formiminotransferase family. In terms of assembly, homooctamer, including four polyglutamate binding sites. The subunits are arranged as a tetramer of dimers, and form a planar ring-shaped structure.

The protein resides in the cytoplasm. Its subcellular location is the cytoskeleton. It is found in the microtubule organizing center. The protein localises to the centrosome. It localises to the centriole. The protein resides in the golgi apparatus. The enzyme catalyses 5-formimidoyltetrahydrofolate + L-glutamate = N-formimidoyl-L-glutamate + (6S)-5,6,7,8-tetrahydrofolate. It catalyses the reaction (6S)-5-formyl-5,6,7,8-tetrahydrofolate + L-glutamate = N-formyl-L-glutamate + (6S)-5,6,7,8-tetrahydrofolate + H(+). The catalysed reaction is 5-formimidoyltetrahydrofolate + 2 H(+) = (6R)-5,10-methenyltetrahydrofolate + NH4(+). It functions in the pathway amino-acid degradation; L-histidine degradation into L-glutamate; L-glutamate from N-formimidoyl-L-glutamate (transferase route): step 1/1. Its pathway is one-carbon metabolism; tetrahydrofolate interconversion. Its function is as follows. Folate-dependent enzyme, that displays both transferase and deaminase activity. Serves to channel one-carbon units from formiminoglutamate to the folate pool. Binds and promotes bundling of vimentin filaments originating from the Golgi. The sequence is that of Formimidoyltransferase-cyclodeaminase (Ftcd) from Mus musculus (Mouse).